A 122-amino-acid chain; its full sequence is Cytochrome c-556 (122 aa).

Residues methionine 11, cysteine 111, cysteine 114, and histidine 115 each contribute to the heme site. Positions 11, 111, 114, and 115 each coordinate heme c.

In terms of assembly, monomer. Binds 1 heme c group covalently per subunit.

In terms of biological role, low-spin monoheme cytochrome c. This is Cytochrome c-556 from Agrobacterium tumefaciens (strain B2A).